The following is a 153-amino-acid chain: Ribosome maturation factor RimP (153 aa).

The protein belongs to the RimP family.

It localises to the cytoplasm. Its function is as follows. Required for maturation of 30S ribosomal subunits. This chain is Ribosome maturation factor RimP, found in Synechococcus elongatus (strain ATCC 33912 / PCC 7942 / FACHB-805) (Anacystis nidulans R2).